A 500-amino-acid polypeptide reads, in one-letter code: L-arabinose isomerase (500 aa).

Positions 306, 331, 348, and 447 each coordinate Mn(2+).

This sequence belongs to the arabinose isomerase family. The cofactor is Mn(2+).

The catalysed reaction is beta-L-arabinopyranose = L-ribulose. Its pathway is carbohydrate degradation; L-arabinose degradation via L-ribulose; D-xylulose 5-phosphate from L-arabinose (bacterial route): step 1/3. In terms of biological role, catalyzes the conversion of L-arabinose to L-ribulose. This Anoxybacillus flavithermus (strain DSM 21510 / WK1) protein is L-arabinose isomerase.